Here is a 578-residue protein sequence, read N- to C-terminus: Suppressor of smlA (578 aa).

In terms of biological role, involved in regulation of group size of aggregation streams. This chain is Suppressor of smlA (sslA1), found in Dictyostelium discoideum (Social amoeba).